Consider the following 516-residue polypeptide: GMP synthase [glutamine-hydrolyzing] (516 aa).

Residues 8–198 enclose the Glutamine amidotransferase type-1 domain; it reads KILILDFGSQ…ALNICKCDAL (191 aa). The active-site Nucleophile is Cys84. Active-site residues include His172 and Glu174. A GMPS ATP-PPase domain is found at 199–391; sequence WNIENIIEND…LGLPYNMLYR (193 aa). Residue 226 to 232 coordinates ATP; sequence SGGVDSS.

As to quaternary structure, homodimer.

The catalysed reaction is XMP + L-glutamine + ATP + H2O = GMP + L-glutamate + AMP + diphosphate + 2 H(+). Its pathway is purine metabolism; GMP biosynthesis; GMP from XMP (L-Gln route): step 1/1. Functionally, catalyzes the synthesis of GMP from XMP. The chain is GMP synthase [glutamine-hydrolyzing] from Francisella philomiragia subsp. philomiragia (strain ATCC 25017 / CCUG 19701 / FSC 153 / O#319-036).